The following is a 167-amino-acid chain: Small ribosomal subunit protein uS5 (167 aa).

The 64-residue stretch at 11–74 (LQEKLIAVNR…DKARRNMTTI (64 aa)) folds into the S5 DRBM domain.

The protein belongs to the universal ribosomal protein uS5 family. Part of the 30S ribosomal subunit. Contacts proteins S4 and S8.

In terms of biological role, with S4 and S12 plays an important role in translational accuracy. Its function is as follows. Located at the back of the 30S subunit body where it stabilizes the conformation of the head with respect to the body. This is Small ribosomal subunit protein uS5 from Baumannia cicadellinicola subsp. Homalodisca coagulata.